The primary structure comprises 197 residues: Large ribosomal subunit protein eL15 (197 aa).

Basic residues-rich tracts occupy residues 70–90 (PKGGRRKSRPKKGRRPKRMGK), 163–179 (RGKTGAGKKARGLRKRG), and 187–197 (PSLRAHRRRGK). Disordered regions lie at residues 70-99 (PKGGRRKSRPKKGRRPKRMGKNKFSPGKSK) and 163-197 (RGKTGAGKKARGLRKRGKGAEKVRPSLRAHRRRGK).

Belongs to the eukaryotic ribosomal protein eL15 family.

The protein is Large ribosomal subunit protein eL15 of Methanopyrus kandleri (strain AV19 / DSM 6324 / JCM 9639 / NBRC 100938).